The chain runs to 357 residues: S-adenosylmethionine:tRNA ribosyltransferase-isomerase (357 aa).

This sequence belongs to the QueA family. Monomer.

It localises to the cytoplasm. It carries out the reaction 7-aminomethyl-7-carbaguanosine(34) in tRNA + S-adenosyl-L-methionine = epoxyqueuosine(34) in tRNA + adenine + L-methionine + 2 H(+). Its pathway is tRNA modification; tRNA-queuosine biosynthesis. Transfers and isomerizes the ribose moiety from AdoMet to the 7-aminomethyl group of 7-deazaguanine (preQ1-tRNA) to give epoxyqueuosine (oQ-tRNA). This chain is S-adenosylmethionine:tRNA ribosyltransferase-isomerase, found in Buchnera aphidicola subsp. Acyrthosiphon pisum (strain APS) (Acyrthosiphon pisum symbiotic bacterium).